A 330-amino-acid chain; its full sequence is Aspartate--ammonia ligase (330 aa).

Belongs to the class-II aminoacyl-tRNA synthetase family. AsnA subfamily.

It localises to the cytoplasm. It catalyses the reaction L-aspartate + NH4(+) + ATP = L-asparagine + AMP + diphosphate + H(+). It functions in the pathway amino-acid biosynthesis; L-asparagine biosynthesis; L-asparagine from L-aspartate (ammonia route): step 1/1. The sequence is that of Aspartate--ammonia ligase from Streptococcus pneumoniae serotype 19F (strain G54).